The primary structure comprises 227 residues: SPbeta prophage-derived uncharacterized membrane protein YomJ (227 aa).

The next 2 membrane-spanning stretches (helical) occupy residues 16–36 and 131–151; these read LFFL…IVGL and GIVA…GLSA.

It is found in the cell membrane. This Bacillus subtilis (strain 168) protein is SPbeta prophage-derived uncharacterized membrane protein YomJ (yomJ).